The sequence spans 637 residues: Sec1 family domain-containing protein 1 (637 aa).

Residues S32, S298, and S523 each carry the phosphoserine modification.

It belongs to the STXBP/unc-18/SEC1 family. Interacts with STX17. Interacts with the COG complex via COG4. Interacts with STX5A. In terms of tissue distribution, highly expressed in testis. Detected at lower levels in brain, astrocytes, heart and small intestine.

Its subcellular location is the cytoplasm. The protein localises to the endoplasmic reticulum membrane. It is found in the golgi apparatus. It localises to the golgi stack membrane. In terms of biological role, plays a role in SNARE-pin assembly and Golgi-to-ER retrograde transport via its interaction with COG4. Involved in vesicular transport between the endoplasmic reticulum and the Golgi. This chain is Sec1 family domain-containing protein 1 (Scfd1), found in Rattus norvegicus (Rat).